We begin with the raw amino-acid sequence, 272 residues long: Acyl-[acyl-carrier-protein]--UDP-N-acetylglucosamine O-acyltransferase (272 aa).

It belongs to the transferase hexapeptide repeat family. LpxA subfamily. As to quaternary structure, homotrimer.

It is found in the cytoplasm. The enzyme catalyses a (3R)-hydroxyacyl-[ACP] + UDP-N-acetyl-alpha-D-glucosamine = a UDP-3-O-[(3R)-3-hydroxyacyl]-N-acetyl-alpha-D-glucosamine + holo-[ACP]. It functions in the pathway glycolipid biosynthesis; lipid IV(A) biosynthesis; lipid IV(A) from (3R)-3-hydroxytetradecanoyl-[acyl-carrier-protein] and UDP-N-acetyl-alpha-D-glucosamine: step 1/6. Functionally, involved in the biosynthesis of lipid A, a phosphorylated glycolipid that anchors the lipopolysaccharide to the outer membrane of the cell. The protein is Acyl-[acyl-carrier-protein]--UDP-N-acetylglucosamine O-acyltransferase of Methylobacterium radiotolerans (strain ATCC 27329 / DSM 1819 / JCM 2831 / NBRC 15690 / NCIMB 10815 / 0-1).